Reading from the N-terminus, the 52-residue chain is Conotoxin Cal9.2c (52 aa).

The propeptide occupies 1–6; the sequence is KKGVTL. 3 disulfide bridges follow: Cys14–Cys31, Cys19–Cys41, and Cys21–Cys46.

In terms of tissue distribution, expressed by the venom duct.

It localises to the secreted. Probable neurotoxin with unknown target. Possibly targets ion channels. The polypeptide is Conotoxin Cal9.2c (Californiconus californicus (California cone)).